We begin with the raw amino-acid sequence, 555 residues long: CTP synthase (555 aa).

The segment at Met-1 to Ile-265 is amidoligase domain. Ser-13 is a binding site for CTP. Ser-13 provides a ligand contact to UTP. Residues Ser-14 to Ile-19 and Asp-71 contribute to the ATP site. Asp-71 and Glu-139 together coordinate Mg(2+). CTP contacts are provided by residues Asp-146–Glu-148, Lys-186–Gln-191, and Lys-222. UTP contacts are provided by residues Lys-186–Gln-191 and Lys-222. Residues Thr-290–Ala-541 form the Glutamine amidotransferase type-1 domain. Gly-351 provides a ligand contact to L-glutamine. The active-site Nucleophile; for glutamine hydrolysis is Cys-378. L-glutamine-binding positions include Leu-379–Gln-382, Glu-402, and Arg-469. Catalysis depends on residues His-514 and Glu-516.

This sequence belongs to the CTP synthase family. Homotetramer.

The catalysed reaction is UTP + L-glutamine + ATP + H2O = CTP + L-glutamate + ADP + phosphate + 2 H(+). The enzyme catalyses L-glutamine + H2O = L-glutamate + NH4(+). It carries out the reaction UTP + NH4(+) + ATP = CTP + ADP + phosphate + 2 H(+). Its pathway is pyrimidine metabolism; CTP biosynthesis via de novo pathway; CTP from UDP: step 2/2. With respect to regulation, allosterically activated by GTP, when glutamine is the substrate; GTP has no effect on the reaction when ammonia is the substrate. The allosteric effector GTP functions by stabilizing the protein conformation that binds the tetrahedral intermediate(s) formed during glutamine hydrolysis. Inhibited by the product CTP, via allosteric rather than competitive inhibition. Catalyzes the ATP-dependent amination of UTP to CTP with either L-glutamine or ammonia as the source of nitrogen. Regulates intracellular CTP levels through interactions with the four ribonucleotide triphosphates. The polypeptide is CTP synthase (Coxiella burnetii (strain CbuK_Q154) (Coxiella burnetii (strain Q154))).